The following is a 394-amino-acid chain: Subtilisin-like protease 4 (394 aa).

An N-terminal signal peptide occupies residues 1 to 17 (CLKTLSVFLAAFAAADA). Residues 18–116 (RAVFKTQGHK…VEQDQVVRIS (99 aa)) constitute a propeptide that is removed on maturation. The region spanning 36 to 115 (YIVVMKDGVS…YVEQDQVVRI (80 aa)) is the Inhibitor I9 domain. Asn-100 is a glycosylation site (N-linked (GlcNAc...) asparagine). In terms of domain architecture, Peptidase S8 spans 126–394 (SWGLGRVSHR…STTNRLLYNG (269 aa)). Catalysis depends on charge relay system residues Asp-158 and His-189. 2 N-linked (GlcNAc...) asparagine glycosylation sites follow: Asn-250 and Asn-306. Catalysis depends on Ser-344, which acts as the Charge relay system.

The protein belongs to the peptidase S8 family.

Its subcellular location is the secreted. Its function is as follows. Secreted subtilisin-like serine protease with keratinolytic activity that contributes to pathogenicity. The chain is Subtilisin-like protease 4 (SUB4) from Trichophyton equinum (Horse ringworm fungus).